A 252-amino-acid polypeptide reads, in one-letter code: 5-oxoprolinase subunit A (252 aa).

Belongs to the LamB/PxpA family. As to quaternary structure, forms a complex composed of PxpA, PxpB and PxpC.

The catalysed reaction is 5-oxo-L-proline + ATP + 2 H2O = L-glutamate + ADP + phosphate + H(+). In terms of biological role, catalyzes the cleavage of 5-oxoproline to form L-glutamate coupled to the hydrolysis of ATP to ADP and inorganic phosphate. In Staphylococcus carnosus (strain TM300), this protein is 5-oxoprolinase subunit A.